Consider the following 457-residue polypeptide: Ribulose bisphosphate carboxylase-like protein (457 aa).

Mg(2+)-binding residues include lysine 199, aspartate 201, and glutamate 202. An N6-carboxylysine modification is found at lysine 199. The tract at residues 426 to 457 (AIAAFGKPAHGQAASPQPSEQASEPDAAGGDS) is disordered.

It belongs to the RuBisCO large chain family. Type IV subfamily. The cofactor is Mg(2+).

Functionally, may be involved in sulfur metabolism and oxidative stress response. Does not show RuBisCO activity. In Allochromatium vinosum (strain ATCC 17899 / DSM 180 / NBRC 103801 / NCIMB 10441 / D) (Chromatium vinosum), this protein is Ribulose bisphosphate carboxylase-like protein.